Reading from the N-terminus, the 573-residue chain is Sulfite reductase [NADPH] hemoprotein beta-component (573 aa).

The disordered stretch occupies residues 1–20 (MAKVELKAPDGPPSDVERIK). 4 residues coordinate [4Fe-4S] cluster: C438, C444, C483, and C487. C487 is a siroheme binding site.

It belongs to the nitrite and sulfite reductase 4Fe-4S domain family. As to quaternary structure, alpha(8)-beta(8). The alpha component is a flavoprotein, the beta component is a hemoprotein. It depends on siroheme as a cofactor. [4Fe-4S] cluster is required as a cofactor.

The catalysed reaction is hydrogen sulfide + 3 NADP(+) + 3 H2O = sulfite + 3 NADPH + 4 H(+). It participates in sulfur metabolism; hydrogen sulfide biosynthesis; hydrogen sulfide from sulfite (NADPH route): step 1/1. Component of the sulfite reductase complex that catalyzes the 6-electron reduction of sulfite to sulfide. This is one of several activities required for the biosynthesis of L-cysteine from sulfate. This chain is Sulfite reductase [NADPH] hemoprotein beta-component, found in Geobacillus kaustophilus (strain HTA426).